Consider the following 956-residue polypeptide: Calsyntenin-3 (956 aa).

Residues 1–19 (MTLLLVSLLLASLLQISSG) form the signal peptide. Over 1 to 21 (MTLLLVSLLLASLLQISSGNK) the chain is Cytoplasmic. At 20 to 847 (NKANKHKPWI…SHRNSMVPSA (828 aa)) the chain is on the extracellular side. Positions 22-42 (ANKHKPWIEAEYQGIVMENDN) form an intramembrane region, helical. 2 Cadherin domains span residues 29–145 (IEAE…APVF) and 146–246 (VERL…KPSW). At 43–73 (TVLLNPPLFALDKDAPLRYAGEICGFRLHGS) the chain is on the cytoplasmic side. The segment at residues 74-94 (GVPFEAVILDKATGEGLIRAK) is an intramembrane region (helical). Residues 95–139 (EPVDCEAQKEHTFTIQAYDCGEGPDGTNTKKSHKATVHVRVNDVN) lie on the Cytoplasmic side of the membrane. The segment at residues 140 to 160 (EFAPVFVERLYRAAVTEGKLY) is an intramembrane region (helical). At 161 to 248 (DRILRVEAID…KPTCKPSWQG (88 aa)) the chain is on the cytoplasmic side. Residues 249–269 (WNKRIEYAPGAGSLALFPGIR) form a helical membrane-spanning segment. The Lumenal portion of the chain corresponds to 270 to 357 (LETCDEPLWN…GTQAVQVPLG (88 aa)). 5 N-linked (GlcNAc...) asparagine glycosylation sites follow: Asn299, Asn327, Asn347, Asn507, and Asn740. A helical membrane pass occupies residues 848 to 868 (ATLIIVVCVGFLVLMVILGLV). The Cytoplasmic segment spans residues 869 to 956 (RIHSLHRRVS…RIIESPPHRY (88 aa)). Residues 916–956 (QTCVAGVAGGQQEEEDSSDSEAADSPSSDERRIIESPPHRY) form a disordered region. Residues 927 to 937 (QEEEDSSDSEA) are compositionally biased toward acidic residues. Residues 943-956 (SDERRIIESPPHRY) are compositionally biased toward basic and acidic residues.

It belongs to the calsyntenin family. Interacts (via cadherin domains) with both alpha and beta isoforms of neurexins (NRXN1, NRXN2 and NRXN3). Directly interacts with APBA2. Forms a tripartite complex with APBA2 and APP. Interacts with low affinity with KLC1. Interacts with SLC23A2/SVCT2. As to quaternary structure, interacts with CIDEA; inhibiting the lipid transferase activity of CIDEA. Interacts with CIDEC; inhibiting the lipid transferase activity of CIDEC. Post-translationally, proteolytically processed under normal cellular conditions. A primary zeta-cleavage generates a large extracellular (soluble) N-terminal domain (sAlc) and a short C-terminal transmembrane fragment (CTF1). A secondary cleavage catalyzed by gamma-secretase within the transmembrane domain releases the beta-Alc-beta chain in the extracellular milieu and produces an intracellular fragment (AlcICD). This processing is strongly suppressed in the tripartite complex formed with APBA2 and APP, which seems to prevent the association with gamma-secretase. Ubiquitinated: endoplasmic reticulum-localized protein is ubiquitinated and degraded by the endoplasmic reticulum-associated degradation (ERAD) pathway. In terms of tissue distribution, restricted to the brain (at protein level). In the cerebral cortex, found in the somas and neuropil of all layers. Expressed at highest levels in neurons of cortical layer 5 and, at lower levels, in neurons of the upper layers. Highly expressed in Purkinje cells. Also found in a few scattered interneurons throughout the granule cell layer and occasionally in neurons in the molecular layer (at protein level). In all layers, high levels in a subpopulation of presumptive GABAergic neurons (based on morphology). Expression is restricted to adipose tissue, with high expression in thermogenic adipocytes (brown adipose tissue).

It is found in the postsynaptic cell membrane. It localises to the endoplasmic reticulum membrane. Its subcellular location is the golgi apparatus membrane. The protein resides in the cell projection. The protein localises to the dendrite. It is found in the lipid droplet. Its function is as follows. Postsynaptic adhesion molecule that binds to presynaptic neurexins to mediate both excitatory and inhibitory synapse formation. Promotes synapse development by acting as a cell adhesion molecule at the postsynaptic membrane, which associates with both neurexin-alpha and neurexin-beta proteins at the presynaptic membrane. Regulates the balance between excitatory and inhibitory synapses by inhibiting formation of excitatory parallel-fiber synapses and promoting formation of inhibitory synapses in the same neuron. May also be involved in ascorbate (vitamin C) uptake via its interaction with SLC23A2/SVCT2. Complex formation with APBA2 and APP, stabilizes APP metabolism and enhances APBA2-mediated suppression of beta-APP40 secretion, due to the retardation of intracellular APP maturation. In terms of biological role, adipose-specific isoform that plays a key role in adaptive thermogenesis. Facilitates the efficient use of stored triglyceride by promoting multilocular morphology of thermogenic adipocytes: acts by inhibiting the activity of CIDEA and CIDEC on lipid droplets, thereby preventing lipid droplet fusion and facilitating lipid utilization. May also participate in adaptive thermogenesis by promoting sympathetic innervation of thermogenic adipose tissue: acts by driving secretion of neurotrophic factor S100B from brown adipocytes, stimulating neurite outgrowth from sympathetic neurons. In Mus musculus (Mouse), this protein is Calsyntenin-3.